A 299-amino-acid chain; its full sequence is Transcription elongation factor A protein 2 (299 aa).

The TFIIS N-terminal domain maps to 5 to 82 (EEIARIARRL…KSWKKLLDVS (78 aa)). A Glycyl lysine isopeptide (Lys-Gly) (interchain with G-Cter in ubiquitin) cross-link involves residue K57. A phosphoserine mark is found at S59 and S100. Positions 82–127 (SDGKSRNQGRGTPLPTSSSKDASRTTDLSCKKPDPPRTPSTPRITT) are disordered. Positions 87-101 (RNQGRGTPLPTSSSK) are enriched in polar residues. Basic and acidic residues predominate over residues 102–116 (DASRTTDLSCKKPDP). The TFIIS central domain occupies 138 to 254 (VRNKCREMLT…EHQMARTGGT (117 aa)). Residues 257–297 (DLFTCNKCRKKNCTYTQVQTRSSDEPMTTYVVCNECGNRWK) form a TFIIS-type zinc finger. Residues C261, C264, C289, and C292 each contribute to the Zn(2+) site.

The protein belongs to the TFS-II family. Interacts with the basal transcription factor GTF2B. Interacts with REXO1. In terms of tissue distribution, testis and ovary specific. Specific to testicular germ cells.

Its subcellular location is the nucleus. In terms of biological role, necessary for efficient RNA polymerase II transcription elongation past template-encoded arresting sites. The arresting sites in DNA have the property of trapping a certain fraction of elongating RNA polymerases that pass through, resulting in locked ternary complexes. Cleavage of the nascent transcript by S-II allows the resumption of elongation from the new 3'-terminus. This chain is Transcription elongation factor A protein 2 (Tcea2), found in Mus musculus (Mouse).